The primary structure comprises 114 residues: NADH-quinone oxidoreductase subunit K 2 (114 aa).

Transmembrane regions (helical) follow at residues 1 to 21 (MIVP…LGVF), 29 to 49 (LIMI…AFIG), and 62 to 82 (FVLF…AIIV).

The protein belongs to the complex I subunit 4L family. As to quaternary structure, NDH-1 is composed of 14 different subunits. Subunits NuoA, H, J, K, L, M, N constitute the membrane sector of the complex.

It localises to the cell inner membrane. It carries out the reaction a quinone + NADH + 5 H(+)(in) = a quinol + NAD(+) + 4 H(+)(out). Its function is as follows. NDH-1 shuttles electrons from NADH, via FMN and iron-sulfur (Fe-S) centers, to quinones in the respiratory chain. The immediate electron acceptor for the enzyme in this species is believed to be ubiquinone. Couples the redox reaction to proton translocation (for every two electrons transferred, four hydrogen ions are translocated across the cytoplasmic membrane), and thus conserves the redox energy in a proton gradient. The sequence is that of NADH-quinone oxidoreductase subunit K 2 from Syntrophobacter fumaroxidans (strain DSM 10017 / MPOB).